The following is a 244-amino-acid chain: 14-3-3 protein beta/alpha-B (244 aa).

N-acetylmethionine is present on methionine 1.

Belongs to the 14-3-3 family. In terms of assembly, homodimer, and heterodimer with other family members.

The protein resides in the cytoplasm. Adapter protein implicated in the regulation of a large spectrum of both general and specialized signaling pathways. Binds to a large number of partners, usually by recognition of a phosphoserine or phosphothreonine motif. Binding generally results in the modulation of the activity of the binding partner. The polypeptide is 14-3-3 protein beta/alpha-B (ywhab-b) (Xenopus laevis (African clawed frog)).